A 404-amino-acid chain; its full sequence is tRNA N6-adenosine threonylcarbamoyltransferase, mitochondrial (404 aa).

Residues Met-1–Val-27 constitute a mitochondrion transit peptide. A divalent metal cation-binding residues include His-135 and His-139. Substrate-binding positions include Leu-157–Gly-161, Asp-190, Gly-210, Glu-214, Ser-317–Asn-318, and Thr-345. An a divalent metal cation-binding site is contributed by Asp-346.

This sequence belongs to the KAE1 / TsaD family. As to quaternary structure, monomer. A divalent metal cation serves as cofactor.

The protein resides in the mitochondrion. It catalyses the reaction L-threonylcarbamoyladenylate + adenosine(37) in tRNA = N(6)-L-threonylcarbamoyladenosine(37) in tRNA + AMP + H(+). Functionally, required for the formation of a threonylcarbamoyl group on adenosine at position 37 (t(6)A37) in mitochondrial tRNAs that read codons beginning with adenine. Probably involved in the transfer of the threonylcarbamoyl moiety of threonylcarbamoyl-AMP (TC-AMP) to the N6 group of A37. Involved in mitochondrial genome maintenance. This is tRNA N6-adenosine threonylcarbamoyltransferase, mitochondrial from Danio rerio (Zebrafish).